The following is a 252-amino-acid chain: Protein BTG3 (252 aa).

The interval 138 to 163 (VTSDYHSGSSSSDEDTSKEVDVKPSS) is disordered.

The protein belongs to the BTG family. In terms of tissue distribution, ubiquitous.

Its function is as follows. Overexpression impairs serum-induced cell cycle progression from the G0/G1 to S phase. This Mus musculus (Mouse) protein is Protein BTG3 (Btg3).